The following is a 251-amino-acid chain: Triosephosphate isomerase (251 aa).

9-11 is a substrate binding site; the sequence is NWK. The active-site Electrophile is the His-95. Glu-167 acts as the Proton acceptor in catalysis. Residues Gly-173, Ser-212, and 233-234 each bind substrate; that span reads GG.

Belongs to the triosephosphate isomerase family. In terms of assembly, homodimer.

The protein localises to the cytoplasm. It carries out the reaction D-glyceraldehyde 3-phosphate = dihydroxyacetone phosphate. Its pathway is carbohydrate biosynthesis; gluconeogenesis. The protein operates within carbohydrate degradation; glycolysis; D-glyceraldehyde 3-phosphate from glycerone phosphate: step 1/1. In terms of biological role, involved in the gluconeogenesis. Catalyzes stereospecifically the conversion of dihydroxyacetone phosphate (DHAP) to D-glyceraldehyde-3-phosphate (G3P). The chain is Triosephosphate isomerase from Pseudomonas paraeruginosa (strain DSM 24068 / PA7) (Pseudomonas aeruginosa (strain PA7)).